A 2017-amino-acid chain; its full sequence is Protein cbp-1 (2017 aa).

Residues 1–13 (MDEPPSKKSRADS) are compositionally biased toward basic and acidic residues. The interval 1-182 (MDEPPSKKSR…PGMFQGDQQQ (182 aa)) is disordered. 2 stretches are compositionally biased toward low complexity: residues 21–30 (ALSALESLEA) and 78–90 (QPGQ…PPQN). Polar residues predominate over residues 106–116 (NPSQTSNNSPR). The segment covering 141-151 (MMSPPSMGRVP) has biased composition (low complexity). Pro residues predominate over residues 152-164 (GPSPGGPQPPGPG). Residues 165–182 (QPQMRPGQPGMFQGDQQQ) show a composition bias toward low complexity. Arginine 234 is subject to Symmetric dimethylarginine; by PRMT5; in vitro. Residues 307–398 (SNGQPIRGPN…PGSSMLATHQ (92 aa)) are disordered. Low complexity predominate over residues 340–379 (QAAAAQHAAQQQAAAQAQAQAAAQQQQQQQREQEAAAAAQ). The TAZ-type 1 zinc finger occupies 399 to 505 (DPEKRKLIQQ…REDCPVCKPL (107 aa)). Disordered stretches follow at residues 558 to 593 (EGFN…DMPD) and 706 to 864 (GRSD…DTVF). Positions 559-573 (GFNGNPFQNGPNRGG) are enriched in low complexity. A KIX domain is found at 593-672 (DCTKEWHHQV…KIYKIQKELQ (80 aa)). A compositionally biased stretch (polar residues) spans 721-773 (PSQQNQPWGGAPNSNMHQQIPPNGQVPQVNNSSTFPSSGNSTPNIGASSTVSA). The segment covering 834 to 854 (KDTKDGVAESKPKEQQAKREP) has biased composition (basic and acidic residues). Positions 864–970 (FSQEDLIKFL…EMFVSEMDPV (107 aa)) constitute a Bromo domain. 2 interaction with histone regions span residues 902 to 948 (DYHE…YNRK) and 1224 to 1226 (YLD). One can recognise a CBP/p300-type HAT domain in the interval 1112–1492 (KYLASKLPHN…LAYSLHETDS (381 aa)). Acetyl-CoA-binding positions include 1225-1227 (LDS), 1237-1238 (RT), isoleucine 1284, arginine 1289, and tryptophan 1293. Residues 1349–1358 (NEEAQRKVKE) are compositionally biased toward basic and acidic residues. A disordered region spans residues 1349-1401 (NEEAQRKVKEDDDDGEDADGGLGGGDSGKKKSSKNKKNNLKKNAKMNKKKAGS). Over residues 1378-1399 (KKSSKNKKNNLKKNAKMNKKKA) the composition is skewed to basic residues. Residues 1494-1540 (GMEYTCNKCSSPAVWHCQSCDDFDLCDGCKPTTQHPHEMEKIKSLIG) form a ZZ-type zinc finger. 8 residues coordinate Zn(2+): cysteine 1499, cysteine 1502, cysteine 1510, cysteine 1513, cysteine 1519, cysteine 1522, histidine 1528, and histidine 1530. The segment at 1550-1631 (GGTRYESIQR…ACTVPFCMNI (82 aa)) adopts a TAZ-type 2 zinc-finger fold. Disordered regions lie at residues 1656–1828 (GLQS…QPVR) and 1908–2017 (SQMS…AGGQ). Residues 1667–1678 (TPSTVSNGTPSN) are compositionally biased toward polar residues. Residues 1699 to 1708 (QVQMQQHQGS) are compositionally biased toward low complexity. Positions 1748-1757 (PQMNANQSRY) are enriched in polar residues. Low complexity-rich tracts occupy residues 1793–1812 (MNPQ…QNPG) and 1908–1932 (SQMS…QAGA). The segment covering 1943–1962 (QNNSQPRAPSGQFASMNPSM) has biased composition (polar residues). Over residues 1963–2017 (QQQYPQQQQGWPQQRQQNPGGMQQNANPYNQFQNRQNMMMMPQQQQPHPSNAGGQ) the composition is skewed to low complexity.

Interacts (via N-terminus domain and HAT domain) with prmt-5; the interaction results in methylation of cbp-1. Interacts (via HAT domain) with cep-1; cep-1 transcriptional activity may be inhibited by interaction with methylated cbp-1. Component of a complex that contains prmt-5 and cbp-1. Methylation by prmt-5 may repress the capacity of cbp-1 to enhance cep-1-dependent transcription of egl-1.

The protein resides in the nucleus. It carries out the reaction L-lysyl-[protein] + acetyl-CoA = N(6)-acetyl-L-lysyl-[protein] + CoA + H(+). Functionally, acetyltransferase enzyme. Acetylates histones, giving a specific tag for transcriptional activation. May prevent DNA damage-induced apoptosis by inhibiting cep-1-dependent transcription activation of the programmed cell death activator egl-1. In differentiated cells, negatively regulates localization of heterochromatin to the nuclear periphery. Plays a role in migration of gonadal distal tip cells, where it probably modulates expression of genes involved in integrin-mediated adhesion. The protein is Protein cbp-1 (cbp-1) of Caenorhabditis elegans.